Reading from the N-terminus, the 824-residue chain is Sphingomyelin phosphodiesterase 4 (824 aa).

The chain crosses the membrane as a helical span at residues leucine 777–cysteine 797.

It depends on Mg(2+) as a cofactor.

It is found in the endoplasmic reticulum membrane. Its subcellular location is the golgi apparatus membrane. The protein localises to the nucleus envelope. It localises to the cell membrane. The protein resides in the sarcolemma. The enzyme catalyses a sphingomyelin + H2O = phosphocholine + an N-acylsphing-4-enine + H(+). Its function is as follows. Catalyzes the hydrolysis of membrane sphingomyelin to form phosphorylcholine and ceramide. It has a relevant role in the homeostasis of membrane sphingolipids, thereby influencing membrane integrity, and endoplasmic reticulum organization and function. May sensitize cells to DNA damage-induced apoptosis. This is Sphingomyelin phosphodiesterase 4 (smpd4) from Xenopus laevis (African clawed frog).